The following is a 339-amino-acid chain: MTFLIAVVMLGLIIFVHELGHFLTAKLFKMPVSEFSIGMGPQVFSVDTKKTTYSFRAIPIGGYVNIEGMEVGSEVENGFSSKPAYQRFIVLFAGVFMNFLMAFILLFVTAKISGRIEYDTNAIIGGLVKGGANEQILKVDDKILELDGKKINIWTDISKVTKELQDKEEITALVERNGKEENLTLKLTKDEENNRVVLGISPKYKKIDLSTTESLDFAKNSFNSILIDTVKGFFTIFSGKVSLKEVSGPVGIFKVVGEVSKFGWISIASLCVVLSINIGVLNLLPIPALDGGRIIFVLLELVGIKVNKKWEKKLHKGGMILLLFFILMISVNDVWKLFN.

Residue histidine 17 coordinates Zn(2+). Residue glutamate 18 is part of the active site. Histidine 21 is a binding site for Zn(2+). Transmembrane regions (helical) follow at residues 88–110 (FIVL…FVTA), 262–284 (FGWI…LNLL), and 318–335 (GMIL…NDVW). Residues 96–179 (FMNFLMAFIL…ITALVERNGK (84 aa)) enclose the PDZ domain.

It belongs to the peptidase M50B family. It depends on Zn(2+) as a cofactor.

The protein resides in the cell membrane. This chain is Putative zinc metalloprotease FN1322, found in Fusobacterium nucleatum subsp. nucleatum (strain ATCC 25586 / DSM 15643 / BCRC 10681 / CIP 101130 / JCM 8532 / KCTC 2640 / LMG 13131 / VPI 4355).